Consider the following 264-residue polypeptide: Undecaprenyl-diphosphatase (264 aa).

A run of 7 helical transmembrane segments spans residues 38-58, 75-95, 106-126, 136-156, 181-201, 217-237, and 242-262; these read RSDF…VLVF, REYV…GLVV, VSPV…VEAY, VTWT…VFPG, FVFL…FLEM, VAFL…MGYI, and FTAF…WLPS.

The protein belongs to the UppP family.

It localises to the cell inner membrane. The catalysed reaction is di-trans,octa-cis-undecaprenyl diphosphate + H2O = di-trans,octa-cis-undecaprenyl phosphate + phosphate + H(+). Its function is as follows. Catalyzes the dephosphorylation of undecaprenyl diphosphate (UPP). Confers resistance to bacitracin. The polypeptide is Undecaprenyl-diphosphatase (Stenotrophomonas maltophilia (strain R551-3)).